Here is a 183-residue protein sequence, read N- to C-terminus: MTMLIVAIGNPGRQYTWTRHNIGFLCADKLLQGFPEAQFKEARKLFSDIAKVESPQGSMVFIKPRTYVNLSGKAVSAVKEYYGIPIDRILVLADDVNHPFGNVRLRQNAGGGGHKGIKSITQSLGSNDYWQLRLGIGRPQREDIELSDFVLGQFTEEEQIGIQSLFIEASALFSQWCSGTQTA.

Tyrosine 15 provides a ligand contact to tRNA. Histidine 20 (proton acceptor) is an active-site residue. Residues tyrosine 67 and asparagine 69 each coordinate tRNA.

The protein belongs to the PTH family. As to quaternary structure, monomer.

Its subcellular location is the cytoplasm. The enzyme catalyses an N-acyl-L-alpha-aminoacyl-tRNA + H2O = an N-acyl-L-amino acid + a tRNA + H(+). In terms of biological role, hydrolyzes ribosome-free peptidyl-tRNAs (with 1 or more amino acids incorporated), which drop off the ribosome during protein synthesis, or as a result of ribosome stalling. Functionally, catalyzes the release of premature peptidyl moieties from peptidyl-tRNA molecules trapped in stalled 50S ribosomal subunits, and thus maintains levels of free tRNAs and 50S ribosomes. This chain is Peptidyl-tRNA hydrolase, found in Chlamydia caviae (strain ATCC VR-813 / DSM 19441 / 03DC25 / GPIC) (Chlamydophila caviae).